The sequence spans 720 residues: MSASDLTSVQATAPQGRRQILVTSALPYANGQIHIGHLVEYIQTDIWVRTLRMHGHEVYYIGADDTHGTPVMLRAEKEGLTPKQLIDRVWTEHKRDFDSFGVSFDNFYSTDSDENRVLSESIYLALKENGLIAERAIEQAYDPVKEMFLPDRFIKGECPKCHAKDQYGDNCEVCGSTYLPTELLNPYSVVSGATPVRKTSTHYFFRLSDPRCESFLREWVSGLAQPEATNKMREWLGDAGEAKLADWDISRDAPYFGFEIPGAPGKYFYVWLDAPVGYYASFKNLCDREGIDFDAWIRAGSTAEQYHFIGKDILYFHTLFWPAMLEFSGHRTPTNVFAHGFLTVDGAKMSKSRGTFITAQSYIDTGLNPEWLRYYFAAKLNATMEDIDLNLDDFQARVNSDLVGKYVNIASRAAGFLIKRFDGRVQDSAMNHPLVAKLRDAIASIAAHYEGREYSRALRQTMELADEVNAYVDGAKPWELAKDPANAVALHETCSVSLEAFRLLSLALKPVMPRVAEAVEAFFGVAPLAWADAAKPLSSAQPIKAYQHLMTRVDPKQIDALLAANRDSLQADAAGAAAAGTTAANAAKDAKSAKANAKAVAANGADDAPISIDDFAKVDLRIAKIVACQAVEGSDKLLQLTLDIGEEKTRNVFSGIKSAYQPEQLVGKLTVMVANLAPRKMKFGLSEGMVLAASAADEKAEPGLYILEPHSGAKPGMRVK.

The 'HIGH' region motif lies at Pro-27–His-37. Residues Cys-158, Cys-161, Cys-171, and Cys-174 each coordinate Zn(2+). The 'KMSKS' region signature appears at Lys-348–Ser-352. An ATP-binding site is contributed by Lys-351. Residues Asp-614–Lys-720 form the tRNA-binding domain.

It belongs to the class-I aminoacyl-tRNA synthetase family. MetG type 1 subfamily. Homodimer. Requires Zn(2+) as cofactor.

It is found in the cytoplasm. It carries out the reaction tRNA(Met) + L-methionine + ATP = L-methionyl-tRNA(Met) + AMP + diphosphate. Its function is as follows. Is required not only for elongation of protein synthesis but also for the initiation of all mRNA translation through initiator tRNA(fMet) aminoacylation. This chain is Methionine--tRNA ligase, found in Burkholderia ambifaria (strain MC40-6).